We begin with the raw amino-acid sequence, 177 residues long: ATP synthase subunit b (177 aa).

The chain crosses the membrane as a helical span at residues 29 to 49; that stretch reads FFFVLAIFLIVLAVIGTFVVP.

It belongs to the ATPase B chain family. F-type ATPases have 2 components, F(1) - the catalytic core - and F(0) - the membrane proton channel. F(1) has five subunits: alpha(3), beta(3), gamma(1), delta(1), epsilon(1). F(0) has three main subunits: a(1), b(2) and c(10-14). The alpha and beta chains form an alternating ring which encloses part of the gamma chain. F(1) is attached to F(0) by a central stalk formed by the gamma and epsilon chains, while a peripheral stalk is formed by the delta and b chains.

Its subcellular location is the cell membrane. F(1)F(0) ATP synthase produces ATP from ADP in the presence of a proton or sodium gradient. F-type ATPases consist of two structural domains, F(1) containing the extramembraneous catalytic core and F(0) containing the membrane proton channel, linked together by a central stalk and a peripheral stalk. During catalysis, ATP synthesis in the catalytic domain of F(1) is coupled via a rotary mechanism of the central stalk subunits to proton translocation. Functionally, component of the F(0) channel, it forms part of the peripheral stalk, linking F(1) to F(0). This Mycolicibacterium paratuberculosis (strain ATCC BAA-968 / K-10) (Mycobacterium paratuberculosis) protein is ATP synthase subunit b.